Reading from the N-terminus, the 259-residue chain is Putative zinc metalloprotease Rip2 (259 aa).

2 helical membrane-spanning segments follow: residues 14-34 (PIFL…WLAG) and 39-59 (PLAY…SLCL). A Zn(2+)-binding site is contributed by histidine 60. Glutamate 61 is an active-site residue. Zn(2+) is bound at residue histidine 64. Transmembrane regions (helical) follow at residues 97-117 (GLPM…AVYV), 128-148 (TLVS…LLAA), 156-176 (IHAV…TALV), and 211-231 (LVFL…FGVV).

The protein belongs to the peptidase M50B family. Zn(2+) serves as cofactor.

It localises to the cell membrane. The protein is Putative zinc metalloprotease Rip2 (rip2) of Mycobacterium tuberculosis (strain ATCC 25618 / H37Rv).